Here is a 557-residue protein sequence, read N- to C-terminus: Dihydroxy-acid dehydratase (557 aa).

D78 provides a ligand contact to Mg(2+). Residue C119 coordinates [2Fe-2S] cluster. Residues D120 and K121 each contribute to the Mg(2+) site. K121 bears the N6-carboxylysine mark. C192 is a binding site for [2Fe-2S] cluster. E442 provides a ligand contact to Mg(2+). S468 acts as the Proton acceptor in catalysis.

It belongs to the IlvD/Edd family. Homodimer. [2Fe-2S] cluster is required as a cofactor. It depends on Mg(2+) as a cofactor.

It catalyses the reaction (2R)-2,3-dihydroxy-3-methylbutanoate = 3-methyl-2-oxobutanoate + H2O. The catalysed reaction is (2R,3R)-2,3-dihydroxy-3-methylpentanoate = (S)-3-methyl-2-oxopentanoate + H2O. The protein operates within amino-acid biosynthesis; L-isoleucine biosynthesis; L-isoleucine from 2-oxobutanoate: step 3/4. Its pathway is amino-acid biosynthesis; L-valine biosynthesis; L-valine from pyruvate: step 3/4. Functions in the biosynthesis of branched-chain amino acids. Catalyzes the dehydration of (2R,3R)-2,3-dihydroxy-3-methylpentanoate (2,3-dihydroxy-3-methylvalerate) into 2-oxo-3-methylpentanoate (2-oxo-3-methylvalerate) and of (2R)-2,3-dihydroxy-3-methylbutanoate (2,3-dihydroxyisovalerate) into 2-oxo-3-methylbutanoate (2-oxoisovalerate), the penultimate precursor to L-isoleucine and L-valine, respectively. This Bacillus anthracis (strain A0248) protein is Dihydroxy-acid dehydratase.